A 59-amino-acid polypeptide reads, in one-letter code: Small ribosomal subunit protein bS21A (59 aa).

It belongs to the bacterial ribosomal protein bS21 family.

This chain is Small ribosomal subunit protein bS21A, found in Gloeobacter violaceus (strain ATCC 29082 / PCC 7421).